The chain runs to 207 residues: Putative 3-methyladenine DNA glycosylase (207 aa).

The protein belongs to the DNA glycosylase MPG family.

The protein is Putative 3-methyladenine DNA glycosylase of Koribacter versatilis (strain Ellin345).